A 513-amino-acid chain; its full sequence is Alpha-amylase mde5 (513 aa).

Positions 1 to 25 are cleaved as a signal peptide; sequence MKHNEVFGWTLKVLSFLLVVIPANA. Cysteine 52 and cysteine 60 are oxidised to a cystine. Tryptophan 105 lines the substrate pocket. Residue asparagine 143 participates in Ca(2+) binding. Histidine 144 serves as a coordination point for substrate. Asparagine 162 is a glycosylation site (N-linked (GlcNAc...) asparagine). Cysteine 171 and cysteine 184 are disulfide-bonded. The Ca(2+) site is built by glutamate 182 and aspartate 195. Residue arginine 224 participates in substrate binding. Aspartate 226, histidine 230, and glutamate 250 together coordinate Ca(2+). The Nucleophile role is filled by aspartate 226. 229 to 230 is a binding site for substrate; the sequence is KH. The active-site Proton donor is the glutamate 250. Glycine 254 contributes to the substrate binding site. Cysteine 260 and cysteine 304 are oxidised to a cystine. Aspartate 318 contacts substrate. The N-linked (GlcNAc...) asparagine glycan is linked to asparagine 357. Position 365 (arginine 365) interacts with substrate. A disulfide bridge connects residues cysteine 454 and cysteine 488.

Belongs to the glycosyl hydrolase 13 family. Ca(2+) is required as a cofactor.

The protein localises to the endoplasmic reticulum. It carries out the reaction Endohydrolysis of (1-&gt;4)-alpha-D-glucosidic linkages in polysaccharides containing three or more (1-&gt;4)-alpha-linked D-glucose units.. The polypeptide is Alpha-amylase mde5 (mde5) (Schizosaccharomyces pombe (strain 972 / ATCC 24843) (Fission yeast)).